The sequence spans 65 residues: Cecropin (65 aa).

A signal peptide spans 1–23; sequence MNFVKVLFFISACILIMLSAVSG.

This sequence belongs to the cecropin family.

The protein resides in the secreted. Has antibacterial activity. The sequence is that of Cecropin (LOC113514368) from Galleria mellonella (Greater wax moth).